The sequence spans 357 residues: Glycerol-1-phosphate dehydrogenase [NAD(P)+] (357 aa).

NAD(+)-binding positions include 104-108 and 126-129; these read GKTID and TAAS. A substrate-binding site is contributed by Asp-131. An NAD(+)-binding site is contributed by Ser-135. Substrate is bound at residue Asp-178. Residues Asp-178 and His-258 each contribute to the Zn(2+) site. Residue His-262 coordinates substrate. Residue His-274 coordinates Zn(2+).

It belongs to the glycerol-1-phosphate dehydrogenase family. Zn(2+) is required as a cofactor.

It is found in the cytoplasm. It carries out the reaction sn-glycerol 1-phosphate + NAD(+) = dihydroxyacetone phosphate + NADH + H(+). The catalysed reaction is sn-glycerol 1-phosphate + NADP(+) = dihydroxyacetone phosphate + NADPH + H(+). The protein operates within membrane lipid metabolism; glycerophospholipid metabolism. In terms of biological role, catalyzes the NAD(P)H-dependent reduction of dihydroxyacetonephosphate (DHAP or glycerone phosphate) to glycerol 1-phosphate (G1P). The G1P thus generated is used as the glycerophosphate backbone of phospholipids in the cellular membranes of Archaea. The chain is Glycerol-1-phosphate dehydrogenase [NAD(P)+] from Methanococcoides burtonii (strain DSM 6242 / NBRC 107633 / OCM 468 / ACE-M).